A 494-amino-acid polypeptide reads, in one-letter code: UDP-N-acetylmuramoyl-L-alanyl-D-glutamate--L-lysine ligase (494 aa).

Serine 30 contacts UDP-N-acetyl-alpha-D-muramoyl-L-alanyl-D-glutamate. 110 to 116 (GTNGKTS) contributes to the ATP binding site. Residues 152-153 (TT), serine 179, and arginine 187 each bind UDP-N-acetyl-alpha-D-muramoyl-L-alanyl-D-glutamate. Lysine 219 bears the N6-carboxylysine mark. Residues 406 to 409 (DNPA) carry the L-lysine recognition motif motif.

Belongs to the MurCDEF family. MurE subfamily. In terms of processing, carboxylation is probably crucial for Mg(2+) binding and, consequently, for the gamma-phosphate positioning of ATP.

Its subcellular location is the cytoplasm. It carries out the reaction UDP-N-acetyl-alpha-D-muramoyl-L-alanyl-D-glutamate + L-lysine + ATP = UDP-N-acetyl-alpha-D-muramoyl-L-alanyl-gamma-D-glutamyl-L-lysine + ADP + phosphate + H(+). Its pathway is cell wall biogenesis; peptidoglycan biosynthesis. Its function is as follows. Catalyzes the addition of L-lysine to the nucleotide precursor UDP-N-acetylmuramoyl-L-alanyl-D-glutamate (UMAG) in the biosynthesis of bacterial cell-wall peptidoglycan. In Staphylococcus aureus (strain bovine RF122 / ET3-1), this protein is UDP-N-acetylmuramoyl-L-alanyl-D-glutamate--L-lysine ligase.